Here is a 746-residue protein sequence, read N- to C-terminus: Zinc finger protein 366 (746 aa).

The disordered stretch occupies residues 1-64 (MQKAMKMVKD…FRYEPSPGDL (64 aa)). C2H2-type zinc fingers lie at residues 250 to 272 (WQCP…ILGH), 278 to 300 (HACS…MLTH), 306 to 328 (HKCQ…MMQH), 334 to 356 (HNCR…EAKH), 362 to 384 (NICV…LTTH), 390 to 412 (YNCS…MMKH), 418 to 440 (YICS…SLTH), 446 to 468 (HKCG…VLIH), 474 to 496 (YQCH…MIVH), 502 to 524 (FKCK…LHLH), and 530 to 553 (FKCL…KVKH). Positions 452 to 746 (GREFTLLANM…MEKQAVLLGI (295 aa)) are interaction with NRIP1. The PXDLS motif lies at 587 to 591 (PFDLS). Positions 587–689 (PFDLSQKRSA…DHEGSDIDCE (103 aa)) are disordered. The span at 613–627 (CQEEEEEAGEEDNCY) shows a compositional bias: acidic residues. Over residues 675-689 (EDRSEDHEGSDIDCE) the composition is skewed to basic and acidic residues.

As to quaternary structure, interacts with ESR1 and NRIP1. Interacts (via PXDLS motif) with CTBP1. In terms of tissue distribution, expressed in immature and mature dendritic cells (DCs).

It is found in the nucleus. In terms of biological role, has transcriptional repression activity. Acts as a corepressor of ESR1; the function seems to involve CTBP1 and histone deacetylases. The chain is Zinc finger protein 366 from Mus musculus (Mouse).